A 437-amino-acid polypeptide reads, in one-letter code: Interactor protein for cytohesin exchange factors 1 (437 aa).

Residues 41-140 (HADCQGWLYK…WLNKLGSAVI (100 aa)) form the PH domain. Disordered regions lie at residues 143–225 (ESTT…PDTV) and 273–307 (LSSDDTSSLSSNHDHLTVPDKPAGSKIMDKEETKV). Acidic residues predominate over residues 151 to 162 (CYSESEQEDPEI). Residues 172–200 (ASQTQSLTAQQASSSSPSLSGTSYSFSSL) show a composition bias toward low complexity. A compositionally biased stretch (polar residues) spans 201 to 214 (ENTVKTPSSFPSSL). Residues 273 to 283 (LSSDDTSSLSS) show a composition bias toward low complexity. 2 CRAC domain regions span residues 315-320 (KLYKSL) and 339-348 (LRKSFVKRCK). A required for interaction with CYTH2 region spans residues 389–437 (KYREWKVMNTLLIQDIYQQQRASPAPDDTDDTPQELKKSPSSPSVENSI). Residues 406 to 437 (QQQRASPAPDDTDDTPQELKKSPSSPSVENSI) form a disordered region. The residue at position 411 (Ser-411) is a Phosphoserine. Residues 427 to 437 (SPSSPSVENSI) are compositionally biased toward polar residues.

In terms of assembly, interacts with guanine-nucleotide exchange factors PSCD1, PSCD2, PSCD3 and PSCD4. Interacts (via C-terminus) with cytohesin-2 CYTH2.

It localises to the cytoplasm. The protein resides in the cell membrane. Functionally, enhances the promotion of guanine-nucleotide exchange by PSCD2 on ARF6 in a concentration-dependent manner. The chain is Interactor protein for cytohesin exchange factors 1 (IPCEF1) from Homo sapiens (Human).